A 303-amino-acid chain; its full sequence is MPDHLSSLGDFTGEEIASLIARAIELKEERSRGIRHQQLAGKSVALIFEKPSTRTRVSFESAMYGLGGQVLFLSGRDTQLSRSEPLKDMARVMSRYVDGIVVRTFGQEVVNELAQYATVPVINALTDLHHPCQILSDIMTVIEKKGAIQDLKIVWVGDGNNMANSWIQAAAKLGFELILACPEGYDPDAEILAAAQAEGAKPITLLRDPQTAVLGADVINVDVFASMGQESEQDERLKIFASYQVNAEMMAKAADDAIVLHCLPAHRGEEITEDVLEGPQCVAFDEAENKMHMHKAILERFLG.

Carbamoyl phosphate-binding positions include 52–55, Gln79, Arg103, and 130–133; these read STRT and HPCQ. L-ornithine is bound by residues Asn161, Asp222, and 226–227; that span reads SM. Carbamoyl phosphate-binding positions include 262–263 and Lys290; that span reads CL.

This sequence belongs to the aspartate/ornithine carbamoyltransferase superfamily. OTCase family.

The protein localises to the cytoplasm. The enzyme catalyses carbamoyl phosphate + L-ornithine = L-citrulline + phosphate + H(+). Its pathway is amino-acid biosynthesis; L-arginine biosynthesis; L-arginine from L-ornithine and carbamoyl phosphate: step 1/3. Its function is as follows. Reversibly catalyzes the transfer of the carbamoyl group from carbamoyl phosphate (CP) to the N(epsilon) atom of ornithine (ORN) to produce L-citrulline. This chain is Ornithine carbamoyltransferase, found in Desulfotalea psychrophila (strain LSv54 / DSM 12343).